The primary structure comprises 172 residues: 5'(3')-deoxyribonucleotidase (172 aa).

The active-site Nucleophile is D8. Mg(2+) is bound by residues D8, D10, and D132. D10 serves as the catalytic Proton donor.

It belongs to the 5'(3')-deoxyribonucleotidase family. The cofactor is Mg(2+).

Its function is as follows. Dephosphorylates nucleoside monophosphates such as the 5' and 2'(3')-phosphates of deoxyribonucleotides in vitro. Also catalyzes the dephosphorylation of coenzyme A (CoA), pyridoxal-5'-phosphate (PLP), riboflavine-5-phosphate (FMN) and nicotinamide adenine dinucleotide phosphate (NADP) in vitro. This chain is 5'(3')-deoxyribonucleotidase (yorS), found in Bacillus subtilis (strain 168).